Reading from the N-terminus, the 399-residue chain is Endo-1,4-beta-xylanase C (399 aa).

A signal peptide spans 1-20; it reads MFKFSASLAALAALVPFVAA. A CBM1 domain is found at 21-56; the sequence is QSPEWGQCGGIGWTGPTTCVAGTTCVESNPYYSQCL. One can recognise a GH10 domain in the interval 81 to 396; sequence SAKLHTLAKA…KPAFNGIAAG (316 aa). E212 acts as the Proton donor in catalysis. Residue E318 is the Nucleophile of the active site. The cysteines at positions 346 and 352 are disulfide-linked.

The protein belongs to the glycosyl hydrolase 10 (cellulase F) family.

Its subcellular location is the secreted. It carries out the reaction Endohydrolysis of (1-&gt;4)-beta-D-xylosidic linkages in xylans.. The protein operates within glycan degradation; xylan degradation. Endo-1,4-beta-xylanase involved in the hydrolysis of xylan, a major structural heterogeneous polysaccharide found in plant biomass representing the second most abundant polysaccharide in the biosphere, after cellulose. This chain is Endo-1,4-beta-xylanase C (xynC), found in Phanerodontia chrysosporium (White-rot fungus).